A 1130-amino-acid chain; its full sequence is Tyrosine-protein kinase ABL1 (1130 aa).

The CAP stretch occupies residues 1 to 60; that stretch reads MLEICLKLVGCKSKKGLSSSSSCYLEEALQRPVASDFEPQGLSEAARWNSKENLLAGPSE. A lipid anchor (N-myristoyl glycine) is attached at Leu-2. Ser-50 carries the phosphoserine modification. Residues 61 to 121 enclose the SH3 domain; that stretch reads NDPNLFVALY…PSNYITPVNS (61 aa). Position 70 is a phosphotyrosine; by autocatalysis (Tyr-70). Residues Tyr-115, Tyr-128, Tyr-139, Tyr-172, Tyr-185, and Tyr-215 each carry the phosphotyrosine modification. Residues 127 to 217 form the SH2 domain; sequence WYHGPVSRNA…GLITTLHYPA (91 aa). At Tyr-226 the chain carries Phosphotyrosine; by autocatalysis. The residue at position 229 (Ser-229) is a Phosphoserine. In terms of domain architecture, Protein kinase spans 242–493; sequence ITMKHKLGGG…PSFAEIHQAF (252 aa). 248–256 provides a ligand contact to ATP; it reads LGGGQYGEV. Tyr-253 and Tyr-257 each carry phosphotyrosine. Residues Lys-271 and 316 to 322 contribute to the ATP site; that span reads EFMTYGN. Residue Asp-363 is the Proton acceptor of the active site. The short motif at 381–405 is the Kinase activation loop element; the sequence is DFGLSRLMTGDTYTAHAGAKFPIKW. The residue at position 393 (Tyr-393) is a Phosphotyrosine; by autocatalysis and SRC-type Tyr-kinases. Phosphotyrosine is present on Tyr-413. A phosphoserine mark is found at Ser-446, Ser-559, and Ser-569. Positions 518-996 are disordered; it reads AVSTLLQAPE…SASSALAGDQ (479 aa). Residues 537–566 show a composition bias toward basic and acidic residues; that stretch reads RAAEHRDTTDVPEMPHSKGQGESDPLDHEP. The span at 586–597 shows a compositional bias: basic and acidic residues; sequence EDERLLPKDKKT. Positions 605-609 match the Nuclear localization signal 1 motif; it reads KKKKK. A phosphoserine; by PAK2 mark is found at Ser-618 and Ser-619. Phosphoserine is present on residues Ser-620, Ser-659, and Ser-683. Over residues 620–640 the composition is skewed to basic and acidic residues; it reads SFREMDGQPERRGAGEEEGRD. A compositionally biased stretch (polar residues) spans 689–698; the sequence is KSSTLTSSRL. The Nuclear localization signal 2 motif lies at 709–715; that stretch reads SSKRFLR. N6-acetyllysine; by EP300 is present on Lys-711. Ser-718 bears the Phosphoserine mark. A phosphothreonine mark is found at Thr-735 and Thr-751. The segment covering 740 to 752 has biased composition (polar residues); it reads LQSTGRQFDSSTF. Basic and acidic residues predominate over residues 755-774; it reads HKSEKPALPRKRAGENRSDQ. The short motif at 762-769 is the Nuclear localization signal 3 element; the sequence is LPRKRAGE. Thr-781 bears the Phosphothreonine mark. Basic and acidic residues predominate over residues 788 to 802; sequence KKNEEAADEVFKDIM. 4 positions are modified to phosphothreonine: Thr-814, Thr-823, Thr-844, and Thr-852. Ser-855 carries the post-translational modification Phosphoserine. Residues 869–968 are DNA-binding; it reads PAEESRVRRH…VLPATPKPQS (100 aa). Residues 881-891 are compositionally biased toward basic and acidic residues; that stretch reads SSESPGRDKGK. Residues 905 to 915 are compositionally biased toward low complexity; that stretch reads ASAGKAGGKPS. Position 917 is a phosphoserine (Ser-917). The segment at 953 to 1130 is F-actin-binding; the sequence is EGLKKPVLPA…VKEISDIVQR (178 aa). Polar residues predominate over residues 965–975; sequence KPQSAKPSGTP. Position 977 is a phosphoserine (Ser-977). Over residues 984–993 the composition is skewed to low complexity; that stretch reads TLPSASSALA. The Nuclear export signal motif lies at 1090–1100; the sequence is LENNLRELQIC.

It belongs to the protein kinase superfamily. Tyr protein kinase family. ABL subfamily. In terms of assembly, interacts with SORBS1 following insulin stimulation. Found in a trimolecular complex containing CDK5 and CABLES1. Interacts with CABLES1 and PSTPIP1. Interacts with ZDHHC16, ITGB1 and HCK. Interacts with STX17; probably phosphorylates STX17. Interacts with INPPL1/SHIP2. Interacts with the 14-3-3 proteins, YWHAB, YWHAE, YWHAG, YWHAH, SFN and YWHAZ; the interaction with 14-3-3 proteins requires phosphorylation on Thr-735 and, sequesters ABL1 into the cytoplasm. Interacts with ABI1, ABI2, BCR, CRK, FGR, FYN, HCK, LYN, PSMA7 RAD9A, RAD51, RAD52, TP73 and WASF3. A complex made of ABL1, CTTN and MYLK regulates cortical actin-based cytoskeletal rearrangement critical to sphingosine 1-phosphate (S1P)-mediated endothelial cell (EC) barrier enhancement. Interacts (via SH3 domain) with CASP9; the interaction is direct and increases in the response of cells to genotoxic stress and ABL1/c-Abl activation. Found in a complex with ABL1, ABL2, CRK and UNC119; leading to the inhibition of CRK phosphorylation by ABL kinases. Interacts with TBX21. Interacts with NEDD9/HEF1; interaction is induced by CXCL12 promotion of ABL-mediated phosphorylation of NEDD9/HEF1. The cofactor is Mg(2+). Acetylated at Lys-711 by EP300 which promotes the cytoplasmic translocation. In terms of processing, phosphorylation at Tyr-70 by members of the SRC family of kinases disrupts SH3 domain-based autoinhibitory interactions and intermolecular associations, such as that with ABI1, and also enhances kinase activity. Phosphorylation at Tyr-226 and Tyr-393 correlate with increased activity. DNA damage-induced activation of ABL1 requires the function of ATM and Ser-446 phosphorylation. Phosphorylation at Ser-569 has been attributed to a CDC2-associated kinase and is coupled to cell division. Phosphorylation at Ser-618 and Ser-619 by PAK2 increases binding to CRK and reduces binding to ABI1. Phosphorylation on Thr-735 is required for binding 14-3-3 proteins for cytoplasmic translocation. Phosphorylated by PRKDC. Post-translationally, polyubiquitinated. Polyubiquitination of ABL1 leads to degradation. As to expression, widely expressed.

It is found in the cytoplasm. It localises to the cytoskeleton. The protein localises to the nucleus. The protein resides in the mitochondrion. Its subcellular location is the nucleus membrane. The enzyme catalyses L-tyrosyl-[protein] + ATP = O-phospho-L-tyrosyl-[protein] + ADP + H(+). Its activity is regulated as follows. Stabilized in the inactive form by an association between the SH3 domain and the SH2-TK linker region, interactions of the N-terminal cap, and contributions from an N-terminal myristoyl group and phospholipids. Activated by autophosphorylation as well as by SRC-family kinase-mediated phosphorylation. Activated by RIN1 binding to the SH2 and SH3 domains. Also stimulated by cell death inducers and DNA-damage. Phosphatidylinositol 4,5-bisphosphate (PIP2), a highly abundant phosphoinositide known to regulate cytoskeletal and membrane proteins, also inhibits the tyrosine kinase activity. Activated by 5-(1,3-diaryl-1H-pyrazol-4-yl)hydantoin, 5-[3-(4-fluorophenyl)-1-phenyl-1H-pyrazol-4-yl]-2,4-imidazolidinedione (DPH). Inhibited by ABI1, whose activity is controlled by ABL1 itself through tyrosine phosphorylation. Also inhibited by imatinib mesylate (Gleevec) which is used for the treatment of chronic myeloid leukemia (CML), and by VX-680, an inhibitor that also acts on imatinib-resistant mutants. In terms of biological role, non-receptor tyrosine-protein kinase that plays a role in many key processes linked to cell growth and survival such as cytoskeleton remodeling in response to extracellular stimuli, cell motility and adhesion, receptor endocytosis, autophagy, DNA damage response and apoptosis. Coordinates actin remodeling through tyrosine phosphorylation of proteins controlling cytoskeleton dynamics like WASF3 (involved in branch formation); ANXA1 (involved in membrane anchoring); DBN1, DBNL, CTTN, RAPH1 and ENAH (involved in signaling); or MAPT and PXN (microtubule-binding proteins). Phosphorylation of WASF3 is critical for the stimulation of lamellipodia formation and cell migration. Involved in the regulation of cell adhesion and motility through phosphorylation of key regulators of these processes such as BCAR1, CRK, CRKL, DOK1, EFS or NEDD9. Phosphorylates multiple receptor tyrosine kinases and more particularly promotes endocytosis of EGFR, facilitates the formation of neuromuscular synapses through MUSK, inhibits PDGFRB-mediated chemotaxis and modulates the endocytosis of activated B-cell receptor complexes. Other substrates which are involved in endocytosis regulation are the caveolin (CAV1) and RIN1. Moreover, ABL1 regulates the CBL family of ubiquitin ligases that drive receptor down-regulation and actin remodeling. Phosphorylation of CBL leads to increased EGFR stability. Involved in late-stage autophagy by regulating positively the trafficking and function of lysosomal components. ABL1 targets to mitochondria in response to oxidative stress and thereby mediates mitochondrial dysfunction and cell death. In response to oxidative stress, phosphorylates serine/threonine kinase PRKD2 at 'Tyr-717'. ABL1 is also translocated in the nucleus where it has DNA-binding activity and is involved in DNA-damage response and apoptosis. Many substrates are known mediators of DNA repair: DDB1, DDB2, ERCC3, ERCC6, RAD9A, RAD51, RAD52 or WRN. Activates the proapoptotic pathway when the DNA damage is too severe to be repaired. Phosphorylates TP73, a primary regulator for this type of damage-induced apoptosis. Phosphorylates the caspase CASP9 on 'Tyr-153' and regulates its processing in the apoptotic response to DNA damage. Phosphorylates PSMA7 that leads to an inhibition of proteasomal activity and cell cycle transition blocks. ABL1 also acts as a regulator of multiple pathological signaling cascades during infection. Several known tyrosine-phosphorylated microbial proteins have been identified as ABL1 substrates. This is the case of A36R of Vaccinia virus, Tir (translocated intimin receptor) of pathogenic E.coli and possibly Citrobacter, CagA (cytotoxin-associated gene A) of H.pylori, or AnkA (ankyrin repeat-containing protein A) of A.phagocytophilum. Pathogens can highjack ABL1 kinase signaling to reorganize the host actin cytoskeleton for multiple purposes, like facilitating intracellular movement and host cell exit. Finally, functions as its own regulator through autocatalytic activity as well as through phosphorylation of its inhibitor, ABI1. Regulates T-cell differentiation in a TBX21-dependent manner. Positively regulates chemokine-mediated T-cell migration, polarization, and homing to lymph nodes and immune-challenged tissues, potentially via activation of NEDD9/HEF1 and RAP1. Phosphorylates TBX21 on tyrosine residues leading to an enhancement of its transcriptional activator activity. The sequence is that of Tyrosine-protein kinase ABL1 (ABL1) from Homo sapiens (Human).